Consider the following 150-residue polypeptide: MKYNRHAKILDIIENNTIETQEELAEKLKQQGMDVTQATVSRDIKELRLIKVMTPEGYYKYSAFAQSEKQVSNRLITILTEAYVSSDYANNIVVVKTLSGMAQAAGSAIDSLKWNEILGTIAGDDTLIMVCRAEKIAEDIVNKFNKMIKS.

Belongs to the ArgR family.

It localises to the cytoplasm. Its pathway is amino-acid biosynthesis; L-arginine biosynthesis [regulation]. Regulates arginine biosynthesis genes. In Ruminiclostridium cellulolyticum (strain ATCC 35319 / DSM 5812 / JCM 6584 / H10) (Clostridium cellulolyticum), this protein is Arginine repressor.